The chain runs to 170 residues: Metalloproteinase inhibitor 4 (170 aa).

The NTR domain occupies 1 to 105 (ISSEKVVPAS…SLNHHYHLNC (105 aa)). Involved in metalloproteinase-binding stretches follow at residues 6–9 (VVPA) and 48–49 (SS). Intrachain disulfides connect C107–C154, C112–C117, and C125–C146.

The protein belongs to the protease inhibitor I35 (TIMP) family.

The protein localises to the secreted. In terms of biological role, complexes with metalloproteinases (such as collagenases) and irreversibly inactivates them by binding to their catalytic zinc cofactor. In Oryctolagus cuniculus (Rabbit), this protein is Metalloproteinase inhibitor 4 (TIMP4).